We begin with the raw amino-acid sequence, 1845 residues long: Collagen alpha-1(XXVII) chain (1845 aa).

The signal sequence occupies residues 1 to 39; that stretch reads MGTGFARGARGTAASGPGGGFLFAWILVSFTCHLASTQG. The propeptide at 40–609 is N-terminal propeptide; that stretch reads APEDVDVLQR…LGPTPFPMLM (570 aa). The Laminin G-like domain maps to 72–237; the sequence is PSGFIFTQRA…NYCAHLRERC (166 aa). N-linked (GlcNAc...) asparagine glycosylation is present at asparagine 272. Disordered stretches follow at residues 299–478, 502–572, 608–774, and 827–1608; these read TKPL…VPKT, PPLG…RPST, LMGP…MGRP, and LMGG…HPIQ. Positions 312–323 are enriched in polar residues; that stretch reads HSSSQTPLSPAK. Composition is skewed to low complexity over residues 327–343 and 356–372; these read RKTP…NSTR and TTTS…SVSP. Asparagine 340 carries an N-linked (GlcNAc...) asparagine glycan. Pro residues predominate over residues 429–439; that stretch reads PRPPVPSPQPL. Residues 444 to 454 are compositionally biased toward polar residues; sequence GLSKKFTNPTV. Positions 554 to 564 are enriched in basic and acidic residues; that stretch reads SARDASPRDLT. 11 consecutive Collagen-like domains span residues 610 to 664, 673 to 732, 742 to 801, 817 to 876, 877 to 936, 937 to 996, 997 to 1038, 1039 to 1096, 1117 to 1176, 1177 to 1236, and 1240 to 1299; these read GPPG…GDPG, GAKG…PGPV, GYIG…PGPP, GYPG…PGPL, GKAG…EGPM, GPPG…VGEK, GDRG…PGSR, GLPG…GAKG, GSQG…PGLE, GDHG…QGEK, and GAKG…NGHK. The segment at 610–1603 is triple-helical; sequence GPPGSKGDCG…RGRPGPPGPP (994 aa). Positions 639 to 654 are enriched in pro residues; the sequence is RGPPGPYGNPGPPGPP. Low complexity-rich tracts occupy residues 677-690 and 699-719; these read NMGL…PGPL and PGAA…SPGA. Residues 865–874 show a composition bias toward gly residues; that stretch reads GLPGGRGKPG. Low complexity predominate over residues 896 to 909; the sequence is FPGDIGPPGDNGPE. Gly residues predominate over residues 1018 to 1027; the sequence is GTPGGIGNPG. Composition is skewed to low complexity over residues 1074–1086, 1112–1122, and 1152–1167; these read RGRP…QGAA, LPGEPGSQGPQ, and KGDL…QGLI. Basic and acidic residues-rich tracts occupy residues 1187 to 1212 and 1226 to 1238; these read LKGD…KGED and REGK…EKGQ. 2 stretches are compositionally biased toward basic and acidic residues: residues 1311–1323 and 1335–1345; these read KGEK…DGKT and PVGDRGDRGEP. In terms of domain architecture, Collagen-like 12 spans 1325–1384; the sequence is GPPGPPGDRGPVGDRGDRGEPGDPGYPGQEGVQGLRGEPGQQGQPGHPGPRGRPGPKGSK. 3 stretches are compositionally biased toward low complexity: residues 1360-1369, 1395-1422, and 1438-1465; these read RGEPGQQGQP, KAGP…RQGP, and PGYQ…PGVA. Collagen-like domains lie at 1424–1483, 1484–1543, and 1544–1603; these read GTAG…SGLP, GQLG…KGIQ, and GPRG…PGPP. The segment covering 1557–1572 has biased composition (low complexity); that stretch reads IIGPPGMLGPSGLPGP. A compositionally biased stretch (pro residues) spans 1588 to 1605; that stretch reads RGPPGPRGRPGPPGPPWH. Residues 1607-1845 constitute a propeptide, C-terminal propeptide; the sequence is IQFQQDDLGA…RLEVGPACFL (239 aa). A Fibrillar collagen NC1 domain is found at 1645-1845; it reads GEIFKTLHYL…RLEVGPACFL (201 aa). Disulfide bonds link cysteine 1675/cysteine 1707, cysteine 1716/cysteine 1843, and cysteine 1752/cysteine 1796. Positions 1693, 1695, 1698, and 1701 each coordinate Ca(2+). Asparagine 1754 is a glycosylation site (N-linked (GlcNAc...) asparagine).

Belongs to the fibrillar collagen family. In terms of tissue distribution, highly expressed in cartilage, eye and ear.

The protein resides in the secreted. It is found in the extracellular space. The protein localises to the extracellular matrix. Its function is as follows. Plays a role during the calcification of cartilage and the transition of cartilage to bone. The protein is Collagen alpha-1(XXVII) chain (Col27a1) of Mus musculus (Mouse).